The primary structure comprises 369 residues: MKYLVLVLCLTSCACRDIGLWTFRYVYNESDNVVFSPYGLTSALSVLRIAAGGNTKREIDVPESVVEDSDAFLALRELFVDASVPLRPEFTAEFSSRFNTSVQRVTFNSENVKDVINSYVKDKTGGDVPRVLDASLDRDTKMLLLSSVRMKTSWRHVFDPSFTTDQPFYSGNVTYKVRMMNKIDTLKTETFTLRNVGYSVTELPYKRRQTAMLLVVPDDLGEIVRALDLSLVRFWIRNMRKDVCQVVMPKFSVESVLDLRDALQRLGVRDAFDPSRADFGQASPSNDLYVTKVLQTSKIEADERGTTASSDTAITLIPRNALTAIVANKPFMFLIYHKPTTTVLFMGTITKGEKVIYDTEGRDDVVSSV.

This sequence belongs to the serpin family. Poxviruses subfamily.

Functionally, important in virulence. This is Serine proteinase inhibitor 1 (SPI-1) from Oryctolagus cuniculus (Rabbit).